The primary structure comprises 513 residues: ATP synthase subunit alpha (513 aa).

169-176 (GDRQVGKT) is an ATP binding site.

Belongs to the ATPase alpha/beta chains family. In terms of assembly, F-type ATPases have 2 components, CF(1) - the catalytic core - and CF(0) - the membrane proton channel. CF(1) has five subunits: alpha(3), beta(3), gamma(1), delta(1), epsilon(1). CF(0) has three main subunits: a(1), b(2) and c(9-12). The alpha and beta chains form an alternating ring which encloses part of the gamma chain. CF(1) is attached to CF(0) by a central stalk formed by the gamma and epsilon chains, while a peripheral stalk is formed by the delta and b chains.

It is found in the cell inner membrane. It carries out the reaction ATP + H2O + 4 H(+)(in) = ADP + phosphate + 5 H(+)(out). In terms of biological role, produces ATP from ADP in the presence of a proton gradient across the membrane. The alpha chain is a regulatory subunit. This is ATP synthase subunit alpha from Aeromonas hydrophila subsp. hydrophila (strain ATCC 7966 / DSM 30187 / BCRC 13018 / CCUG 14551 / JCM 1027 / KCTC 2358 / NCIMB 9240 / NCTC 8049).